The chain runs to 790 residues: Protein SEY1 (790 aa).

The Cytoplasmic segment spans residues 1–692 (MELSEGELSH…KRSIVQHITQ (692 aa)). A GB1/RHD3-type G domain is found at 55–284 (GNNYHIISVF…VSNELFKPEY (230 aa)). Position 65–72 (65–72 (GSQSTGKS)) interacts with GTP. Residues 693–713 (IPYYIYLIILVLGWNEFMAII) traverse the membrane as a helical segment. Residues 714 to 716 (RNP) are Lumenal-facing. The chain crosses the membrane as a helical span at residues 717-737 (LFFSLSIVLGATVYVLYYLGL). The Cytoplasmic portion of the chain corresponds to 738 to 790 (LRPALVVAQRTMDEVIVMAKTKLREVLIDDHEVTGRQLNKMAGSKENIELDDM).

It belongs to the TRAFAC class dynamin-like GTPase superfamily. GB1/RHD3 GTPase family. RHD3 subfamily.

Its subcellular location is the endoplasmic reticulum membrane. Its function is as follows. Cooperates with the reticulon proteins and tubule-shaping DP1 family proteins to generate and maintain the structure of the tubular endoplasmic reticulum network. Has GTPase activity, which is required for its function in ER organization. Required for virulence and resistance to cycloheximide. The polypeptide is Protein SEY1 (Candida albicans (strain SC5314 / ATCC MYA-2876) (Yeast)).